A 98-amino-acid polypeptide reads, in one-letter code: Gas vesicle protein J2 (98 aa).

Positions 75-98 (AGVDADDSKSVLERPDPPTTEGSE) are disordered. Basic and acidic residues predominate over residues 80 to 90 (DDSKSVLERPD).

This sequence belongs to the gas vesicle GvpA family. In terms of assembly, gvpF to GvpM interact with each other in vitro, and may form multi-subunit complex(es). Interacts with GvpA.

The protein localises to the gas vesicle. A minor component of the gas vesicle. Proteins GvpF to GvpM might be involved in nucleating gas vesicle formation. Gas vesicles are hollow, gas filled proteinaceous nanostructures found in several microbial planktonic microorganisms. They allow positioning of halobacteria at the optimal depth for growth in the poorly aerated, shallow brine pools of their habitat. In terms of biological role, expression of 2 c-vac DNA fragments containing 2 divergently transcribed regions (gvpE-gvpF-gvpG-gvpH-gvpI-gvpJ-gvpK-gvpL-gvpM and gvpA-gvpC-gvpN-gvpO) allows H.volcanii to produce gas vesicles. This is Gas vesicle protein J2 from Halobacterium salinarum (strain ATCC 700922 / JCM 11081 / NRC-1) (Halobacterium halobium).